We begin with the raw amino-acid sequence, 340 residues long: Protein phosphatase PTC7 homolog fig (340 aa).

The PPM-type phosphatase domain maps to 58–314 (RAQAETIQAP…DDITVVLASV (257 aa)). 3 residues coordinate Mn(2+): aspartate 90, glycine 91, and aspartate 236.

It belongs to the PP2C family. Mg(2+) serves as cofactor. Mn(2+) is required as a cofactor.

It carries out the reaction O-phospho-L-seryl-[protein] + H2O = L-seryl-[protein] + phosphate. The catalysed reaction is O-phospho-L-threonyl-[protein] + H2O = L-threonyl-[protein] + phosphate. The polypeptide is Protein phosphatase PTC7 homolog fig (Drosophila pseudoobscura pseudoobscura (Fruit fly)).